The primary structure comprises 944 residues: Protein translocase subunit SecA (944 aa).

ATP contacts are provided by residues Gln-77, 95 to 99, and Asp-484; that span reads GEGKT. The disordered stretch occupies residues 920-944; that stretch reads EQEKQTRKKKKKKPHEDESSKTKIG. The segment covering 933–944 has biased composition (basic and acidic residues); sequence PHEDESSKTKIG.

This sequence belongs to the SecA family. In terms of assembly, monomer and homodimer. Part of the essential Sec protein translocation apparatus which comprises SecA, SecYEG and auxiliary proteins SecDF. Other proteins may also be involved.

The protein localises to the cell membrane. Its subcellular location is the cytoplasm. It catalyses the reaction ATP + H2O + cellular proteinSide 1 = ADP + phosphate + cellular proteinSide 2.. Part of the Sec protein translocase complex. Interacts with the SecYEG preprotein conducting channel. Has a central role in coupling the hydrolysis of ATP to the transfer of proteins into and across the cell membrane, serving as an ATP-driven molecular motor driving the stepwise translocation of polypeptide chains across the membrane. The chain is Protein translocase subunit SecA from Mycoplasma mycoides subsp. mycoides SC (strain CCUG 32753 / NCTC 10114 / PG1).